The chain runs to 256 residues: Hemin import ATP-binding protein HmuV (256 aa).

In terms of domain architecture, ABC transporter spans 2-238; that stretch reads ISAQNLVYSL…QALTMLYGAD (237 aa). 34 to 41 is an ATP binding site; sequence GPNGAGKS.

It belongs to the ABC transporter superfamily. Heme (hemin) importer (TC 3.A.1.14.5) family. As to quaternary structure, the complex is composed of two ATP-binding proteins (HmuV), two transmembrane proteins (HmuU) and a solute-binding protein (HmuT).

It localises to the cell inner membrane. Its function is as follows. Part of the ABC transporter complex HmuTUV involved in hemin import. Responsible for energy coupling to the transport system. The sequence is that of Hemin import ATP-binding protein HmuV from Escherichia coli O6:K15:H31 (strain 536 / UPEC).